The chain runs to 315 residues: Putative steroid dehydrogenase 2 (315 aa).

Position 47–76 (47–76 (ASWAVVTGATDGIGKSYSFELARRGFNVYI)) interacts with NADP(+). Y202 is a catalytic residue.

It belongs to the short-chain dehydrogenases/reductases (SDR) family. 17-beta-HSD 3 subfamily.

The protein is Putative steroid dehydrogenase 2 (stdh-2) of Caenorhabditis elegans.